Consider the following 790-residue polypeptide: Kinesin-like protein KIF9 (790 aa).

The region spanning 6-340 (KVQAFVRVRP…LRFASRMKLV (335 aa)) is the Kinesin motor domain. ATP-binding positions include 12–14 (RVR) and 93–100 (GQTGAGKT). Residues 342-442 (TEPAINEKYD…EQEVESALRR (101 aa)) adopt a coiled-coil conformation. A disordered region spans residues 482-521 (GVAPFSVKPGKKPKTKKTPKDQFSSSARKEGASSPVSGKD). Residue threonine 530 is modified to Phosphothreonine. The segment at 547-577 (RERETSSIEPLISDSPKEELRAPRPSTPPSR) is disordered. Residues 600 to 695 (KSILNERKKR…YCQRLVDQCR (96 aa)) are a coiled coil.

It belongs to the TRAFAC class myosin-kinesin ATPase superfamily. Kinesin family. In terms of assembly, interacts with HYDIN. Highly expressed in the testis (at protein level). Weakly expressed in the brain, thymus, lung and heart.

It localises to the cytoplasm. Its subcellular location is the cytoskeleton. The protein localises to the cell projection. It is found in the cilium. The protein resides in the flagellum. It localises to the flagellum axoneme. Its function is as follows. Essential for normal male fertility and for progressive motility of spermatozoa. This chain is Kinesin-like protein KIF9 (Kif9), found in Mus musculus (Mouse).